We begin with the raw amino-acid sequence, 596 residues long: MVNLLSANREALIAQSICATVLKGNWKNILKHKVDSGLLKSAITTQVISELSLFSGYGGPSLSWSFFIWTDSLPSSKHSLQSSWKMILILTKHKHFKTAHQLLDKLAQRELLSSPLVLRSLVGGVSEDPEDVSHVFSWLMIYYAKAGMINDSIVVFEQIRSCGLKPHLQACTVLLNSLVKQRLTDTVWKIFKKMVKLGVVANIHVYNVLVHACSKSGDPEKAEKLLSEMEEKGVFPDIFTYNTLISVYCKKSMHFEALSVQDRMERSGVAPNIVTYNSFIHGFSREGRMREATRLFREIKDDVTANHVTYTTLIDGYCRMNDIDEALRLREVMESRGFSPGVVTYNSILRKLCEDGRIREANRLLTEMSGKKIEPDNITCNTLINAYCKIEDMVSAVKVKKKMIESGLKLDMYSYKALIHGFCKVLELENAKEELFSMIEKGFSPGYATYSWLVDGFYNQNKQDEITKLLEEFEKRGLCADVALYRGLIRRICKLEQVDYAKVLFESMEKKGLVGDSVIFTTMAYAYWRTGKVTEASALFDVMYNRRLMVNLKLYKSISASYAGDNDVLRFFWSHVGDRCLISKSILREMNRSEVL.

PPR repeat units follow at residues 132–166 (VSHV…GLKP), 167–201 (HLQA…GVVA), 202–236 (NIHV…GVFP), 237–271 (DIFT…GVAP), 272–302 (NIVT…IKDD), 306–340 (NHVT…GFSP), 341–375 (GVVT…KIEP), 376–410 (DNIT…GLKL), 411–445 (DMYS…GFSP), 446–480 (GYAT…GLCA), 481–515 (DVAL…GLVG), and 516–550 (DSVI…RLMV).

The protein belongs to the PPR family. P subfamily.

This Arabidopsis thaliana (Mouse-ear cress) protein is Pentatricopeptide repeat-containing protein At5g38730.